We begin with the raw amino-acid sequence, 275 residues long: NAD kinase (275 aa).

Aspartate 66 serves as the catalytic Proton acceptor. NAD(+) is bound by residues 66-67 (DG), histidine 71, 135-136 (NE), lysine 146, arginine 163, aspartate 165, and 176-181 (TAYAMS).

It belongs to the NAD kinase family. It depends on a divalent metal cation as a cofactor.

The protein resides in the cytoplasm. It catalyses the reaction NAD(+) + ATP = ADP + NADP(+) + H(+). Involved in the regulation of the intracellular balance of NAD and NADP, and is a key enzyme in the biosynthesis of NADP. Catalyzes specifically the phosphorylation on 2'-hydroxyl of the adenosine moiety of NAD to yield NADP. The protein is NAD kinase of Methanosphaera stadtmanae (strain ATCC 43021 / DSM 3091 / JCM 11832 / MCB-3).